A 323-amino-acid chain; its full sequence is tRNA U34 carboxymethyltransferase (323 aa).

Carboxy-S-adenosyl-L-methionine-binding positions include Lys91, Trp105, Lys110, Gly130, 181–182 (IE), Met196, Tyr200, and Arg315.

This sequence belongs to the class I-like SAM-binding methyltransferase superfamily. CmoB family. Homotetramer.

The catalysed reaction is carboxy-S-adenosyl-L-methionine + 5-hydroxyuridine(34) in tRNA = 5-carboxymethoxyuridine(34) in tRNA + S-adenosyl-L-homocysteine + H(+). Catalyzes carboxymethyl transfer from carboxy-S-adenosyl-L-methionine (Cx-SAM) to 5-hydroxyuridine (ho5U) to form 5-carboxymethoxyuridine (cmo5U) at position 34 in tRNAs. The polypeptide is tRNA U34 carboxymethyltransferase (Yersinia pseudotuberculosis serotype IB (strain PB1/+)).